We begin with the raw amino-acid sequence, 302 residues long: Polyadenylate-binding protein 2 (302 aa).

A compositionally biased stretch (low complexity) spans 1 to 12 (MAAAAAAAAAAG). The segment at 1-111 (MAAAAAAAAA…EADPGDGAIE (111 aa)) is disordered. Residue alanine 2 is modified to N-acetylalanine. Positions 2-141 (AAAAAAAAAA…LKELQNEVEK (140 aa)) are interaction with SKIP. Omega-N-methylarginine is present on arginine 17. Phosphoserine is present on serine 19. Residues 30-47 (GAGGEAGEGDPGGAGDYG) are compositionally biased toward gly residues. A compositionally biased stretch (acidic residues) spans 51–68 (ESEELEPGELLPEPEPEE). Serine 52 is modified (phosphoserine). The span at 73-83 (PRAPPGAPGPG) shows a compositional bias: pro residues. Serine 91 bears the Phosphoserine mark. Positions 111–147 (EDPELEAIKARVREMEEEAEKLKELQNEVEKQMNMSP) form a coiled coil. The interval 115 to 143 (LEAIKARVREMEEEAEKLKELQNEVEKQM) is stimulates PAPOLA. A phosphoserine mark is found at serine 146 and serine 231. The region spanning 168–245 (RSIYVGNVDY…RQIKVIPKRT (78 aa)) is the RRM domain. Asymmetric dimethylarginine; alternate occurs at positions 234, 255, and 259. Arginine 234, arginine 255, and arginine 259 each carry omega-N-methylarginine; alternate. A strong poly(A) affinity and self-association region spans residues 255-302 (RGFPRSRYRARTTNYNSSRSRFYSGFNSRPRGRIYRGRARATSWYSPY). 11 positions are modified to asymmetric dimethylarginine: arginine 261, arginine 263, arginine 265, arginine 273, arginine 275, arginine 283, arginine 285, arginine 287, arginine 290, arginine 292, and arginine 294. Residues 282 to 302 (SRPRGRIYRGRARATSWYSPY) form an interaction with PAPOLA region.

As to quaternary structure, monomer and homooligomer. Identified in a IGF2BP1-dependent mRNP granule complex containing untranslated mRNAs. Binds RNA as a monomer and oligomerizes when bound to poly(A). Interacts with PAPOLA, but only in presence of oligo(A) RNA. Interacts with NUDT21/CPSF5 and transportin. Associates in a ternary complex with CPSF4 and NS/NS1 and interaction with NS/NS1, blocks nuclear export of host cell mRNAs. Associates in a single complex with SKIP and MYOD1 and interacts with SKIP in differentiated myocytes. May interact with SETX. Interacts (via RRM domain and C-terminal arginine-rich region) with ZFP36 (via hypophosphorylated form); this interaction occurs in the nucleus in a RNA-independent manner, decreases in presence of single-stranded poly(A) RNA-oligomer and in a p38-dependent-manner and may down-regulated RNA poly(A) polymerase activity. Component of the poly(A) tail exosome targeting (PAXT) complex composed of PABPN1, ZFC3H1 and MTREX. Interacts with ZFC3H1 in a RNase-insensitive manner. Interacts with FRG1. Interacts with ZC3H11A. Post-translationally, arginine dimethylation is asymmetric and involves PRMT1 and PRMT3. It does not influence the RNA binding properties. Ubiquitous.

It is found in the cytoplasm. Its subcellular location is the nucleus. The protein resides in the nucleus speckle. In terms of biological role, involved in the 3'-end formation of mRNA precursors (pre-mRNA) by the addition of a poly(A) tail of 200-250 nt to the upstream cleavage product. Stimulates poly(A) polymerase (PAPOLA) conferring processivity on the poly(A) tail elongation reaction and also controls the poly(A) tail length. Increases the affinity of poly(A) polymerase for RNA. Is also present at various stages of mRNA metabolism including nucleocytoplasmic trafficking and nonsense-mediated decay (NMD) of mRNA. Cooperates with SKIP to synergistically activate E-box-mediated transcription through MYOD1 and may regulate the expression of muscle-specific genes. Binds to poly(A) and to poly(G) with high affinity. May protect the poly(A) tail from degradation. Subunit of the trimeric poly(A) tail exosome targeting (PAXT) complex, a complex that directs a subset of long and polyadenylated poly(A) RNAs for exosomal degradation. The RNA exosome is fundamental for the degradation of RNA in eukaryotic nuclei. Substrate targeting is facilitated by its cofactor MTREX, which links to RNA-binding protein adapters. This Mus musculus (Mouse) protein is Polyadenylate-binding protein 2 (Pabpn1).